Reading from the N-terminus, the 38-residue chain is Large ribosomal subunit protein bL36 (38 aa).

This sequence belongs to the bacterial ribosomal protein bL36 family.

In Karelsulcia muelleri (strain GWSS) (Sulcia muelleri), this protein is Large ribosomal subunit protein bL36.